The chain runs to 178 residues: Cytochrome b6-f complex iron-sulfur subunit (178 aa).

A helical transmembrane segment spans residues leucine 20–isoleucine 42. Residues alanine 65–valine 161 enclose the Rieske domain. The [2Fe-2S] cluster site is built by cysteine 107, histidine 109, cysteine 125, and histidine 128. A disulfide bridge links cysteine 112 with cysteine 127.

This sequence belongs to the Rieske iron-sulfur protein family. In terms of assembly, the 4 large subunits of the cytochrome b6-f complex are cytochrome b6, subunit IV (17 kDa polypeptide, PetD), cytochrome f and the Rieske protein, while the 4 small subunits are PetG, PetL, PetM and PetN. The complex functions as a dimer. It depends on [2Fe-2S] cluster as a cofactor.

The protein localises to the cellular thylakoid membrane. The enzyme catalyses 2 oxidized [plastocyanin] + a plastoquinol + 2 H(+)(in) = 2 reduced [plastocyanin] + a plastoquinone + 4 H(+)(out). Functionally, component of the cytochrome b6-f complex, which mediates electron transfer between photosystem II (PSII) and photosystem I (PSI), cyclic electron flow around PSI, and state transitions. This Synechococcus sp. (strain RCC307) protein is Cytochrome b6-f complex iron-sulfur subunit.